We begin with the raw amino-acid sequence, 193 residues long: 7-methyl-GTP pyrophosphatase (193 aa).

D69 acts as the Proton acceptor in catalysis.

The protein belongs to the Maf family. YceF subfamily. It depends on a divalent metal cation as a cofactor.

The protein resides in the cytoplasm. The catalysed reaction is N(7)-methyl-GTP + H2O = N(7)-methyl-GMP + diphosphate + H(+). Nucleoside triphosphate pyrophosphatase that hydrolyzes 7-methyl-GTP (m(7)GTP). May have a dual role in cell division arrest and in preventing the incorporation of modified nucleotides into cellular nucleic acids. In Chromohalobacter salexigens (strain ATCC BAA-138 / DSM 3043 / CIP 106854 / NCIMB 13768 / 1H11), this protein is 7-methyl-GTP pyrophosphatase.